The following is an 86-amino-acid chain: Beta-mammal/insect toxin To1 (86 aa).

The N-terminal stretch at Met-1–Cys-20 is a signal peptide. The region spanning Lys-22–Lys-84 is the LCN-type CS-alpha/beta domain. Disulfide bonds link Cys-32–Cys-83, Cys-36–Cys-58, Cys-44–Cys-64, and Cys-48–Cys-66. Lys-84 carries the lysine amide modification.

This sequence belongs to the long (4 C-C) scorpion toxin superfamily. Sodium channel inhibitor family. Beta subfamily. Expressed by the venom gland.

It is found in the secreted. In terms of biological role, beta toxin that show multiple effects. It enhances the open probability at more negative potentials of human Nav1.3/SCN3A and Nav1.6/SCN8A, of the insect channel BgNaV1 and of arachnid VdNaV1 channel. It promotes an important shift in slow inactivation processes as a function of the prepulse voltage in human Nav1.3/SCN3A and Nav1.6/SCN8A and a small shift in Nav1.1/SCN1A, Nav1.2/SCN2A and Nav1.4/SCN4A. Finally, it reduces the peak of sodium currents in Nav1.3/SCN3A (80% inhibition at 70 nM of toxin), Nav1.6/SCN8A (55.3%), Nav1.1/SCN1A (53.3%), Nav1.5/SCN5A (46.7%), Nav1.2/SCN2A (42.7%) and Nav1.4/SCN4A (20%) voltage-gated sodium channels. It has also been shown to affect the sodium current permeability of rat cerebellum granular cells in a partially reversible manner. In vivo, an intraperitoneal injection (20 ug) into mice produces excitability, respiratory problems, convulsions and death, within the first 30 minutes after injection. The chain is Beta-mammal/insect toxin To1 from Tityus obscurus (Amazonian scorpion).